Reading from the N-terminus, the 733-residue chain is Zinc finger transcription factor ace1 (733 aa).

Over residues 1–11 the composition is skewed to basic residues; the sequence is MSFSNPRRRTP. Disordered regions lie at residues 1–22, 34–63, and 89–183; these read MSFS…CEHG, GATF…SQSA, and ASLS…SSTT. Residues 39-49 show a composition bias toward low complexity; it reads SPTSPSASSAA. A compositionally biased stretch (basic residues) spans 132–142; it reads LRPRSVRRTRN. The segment covering 148 to 158 has biased composition (polar residues); that stretch reads GIGSSVVSTND. Residues 171 to 183 show a composition bias toward low complexity; sequence ASALTRSAASSTT. 3 consecutive C2H2-type zinc fingers follow at residues 400–424, 428–456, and 463–488; these read KKCR…EKTH, WKCP…NDKH, and YECL…EKAH. Residues 497-533 form a disordered region; it reads TNGKKAPSQNGSTAQQTPPLANVSTPSSTPSYSVPTP. Positions 503–515 are enriched in polar residues; that stretch reads PSQNGSTAQQTPP. Low complexity predominate over residues 519 to 530; it reads VSTPSSTPSYSV.

The protein localises to the nucleus. Binds to the promoter of the cbh1 gene and activates transcription. The sequence is that of Zinc finger transcription factor ace1 (ace1) from Hypocrea jecorina (Trichoderma reesei).